The following is a 448-amino-acid chain: UDP-N-acetylmuramoylalanine--D-glutamate ligase (448 aa).

112–118 (GSNAKST) provides a ligand contact to ATP.

The protein belongs to the MurCDEF family.

It is found in the cytoplasm. The enzyme catalyses UDP-N-acetyl-alpha-D-muramoyl-L-alanine + D-glutamate + ATP = UDP-N-acetyl-alpha-D-muramoyl-L-alanyl-D-glutamate + ADP + phosphate + H(+). The protein operates within cell wall biogenesis; peptidoglycan biosynthesis. Functionally, cell wall formation. Catalyzes the addition of glutamate to the nucleotide precursor UDP-N-acetylmuramoyl-L-alanine (UMA). The chain is UDP-N-acetylmuramoylalanine--D-glutamate ligase from Acinetobacter baylyi (strain ATCC 33305 / BD413 / ADP1).